The chain runs to 48 residues: MLSPDMPLKNLDEYDRLGIKKKADAIARFIENRWDYLQKNNMIALYGN.

This is an uncharacterized protein from Methanocaldococcus jannaschii (strain ATCC 43067 / DSM 2661 / JAL-1 / JCM 10045 / NBRC 100440) (Methanococcus jannaschii).